The chain runs to 586 residues: MKKGSKLILILLVTFFACLLIFPTLKWYFLMSVEDKKISSYSQEALRDYSKKKALNDLVKLKELYNKDPNSSIPASLSYLIPIAKNNYRSSMKIPPNIFTAKTLREGFLTDSDMGEVSLEIYRYYENIKKGKSRIIHLGLDLSGGMSVTISLDYSSVEKKLGRSLTFAEREDAIYRIMQILKDRVBRFGLTEPKIVREAGGNKIFLDIPGEKDESRVSTLLSGKGNLTFYVVDDESTSLLHRKILEAGSLFSIPEIQASMNLPDSKQIFPWYVKDSYGVDDESSVRYYVVDASPENSFDGAHIKDAGVSNDPRTGRDTVAFSLDVDGSEKFFKFTQKNVGKSLAVVMEGKIKSVAGIGYAITGGNVSIQGDSFDKKEAQDLALVFKTAAFPVDIKIDDLRIIGPTLGARTIDLGIKASALALCLVFLFICVYYGLSGVVAGFSLVIYNVFLILAILSAFNFTLTLTSIAGLILTMGMAVDINIVIYERIKEEIREGRRFENAFEAGFKKAFLSIMDANITTFIAVLFLTLLGTGVIQGFAWSLSVGIVASLFSSLIFSRFILEFIISVRKSKFISISWSSKYAKSN.

6 helical membrane passes run 7–27 (LILI…TLKW), 418–438 (SALA…LSGV), 439–459 (VAGF…LSAF), 465–485 (LTSI…NIVI), 521–541 (TFIA…GFAW), and 546–566 (GIVA…EFII).

It belongs to the SecD/SecF family. SecD subfamily. As to quaternary structure, forms a complex with SecF. Part of the essential Sec protein translocation apparatus which comprises SecA, SecYEG and auxiliary proteins SecDF. Other proteins may also be involved.

Its subcellular location is the cell inner membrane. Functionally, part of the Sec protein translocase complex. Interacts with the SecYEG preprotein conducting channel. SecDF uses the proton motive force (PMF) to complete protein translocation after the ATP-dependent function of SecA. In Borreliella burgdorferi (strain ATCC 35210 / DSM 4680 / CIP 102532 / B31) (Borrelia burgdorferi), this protein is Protein translocase subunit SecD.